Reading from the N-terminus, the 235-residue chain is Chalcone--flavanone isomerase 2 (235 aa).

T50 and S192 together coordinate substrate.

This sequence belongs to the chalcone isomerase family.

It catalyses the reaction a chalcone = a flavanone.. Its pathway is secondary metabolite biosynthesis; flavonoid biosynthesis. Functionally, catalyzes the intramolecular cyclization of bicyclic chalcones into tricyclic (S)-flavanones. Responsible for the isomerization of 4,2',4',6'-tetrahydroxychalcone (also termed chalcone) into naringenin. The polypeptide is Chalcone--flavanone isomerase 2 (CHI2) (Chrysanthemum morifolium (Florist's daisy)).